The sequence spans 831 residues: Myosin-A (831 aa).

The region spanning 99 to 773 (MTYGDIGMLP…GAKELTQIQR (675 aa)) is the Myosin motor domain. ATP is bound at residue 193-200 (GESGAGKT). Positions 663–673 (PHFIRCIKPND) are actin-binding. The tract at residues 775–831 (CLSSWEPLVSVLEAYYAGRRHKKQLLKKTPFIIRAQAHIRRHLVDNNVSPATVQPAF) is tail.

The protein belongs to the TRAFAC class myosin-kinesin ATPase superfamily. Myosin family.

Its subcellular location is the cell membrane. Myosins are actin-based motor molecules with ATPase activity. Unconventional myosins serve in intracellular movements. Their highly divergent tails are presumed to bind to membranous compartments, which would be moved relative to actin filaments. This chain is Myosin-A, found in Toxoplasma gondii.